Here is a 715-residue protein sequence, read N- to C-terminus: Polyribonucleotide nucleotidyltransferase (715 aa).

Mg(2+)-binding residues include aspartate 498 and aspartate 504. One can recognise a KH domain in the interval proline 565 to isoleucine 625. The 72-residue stretch at glycine 635–leucine 706 folds into the S1 motif domain.

This sequence belongs to the polyribonucleotide nucleotidyltransferase family. Mg(2+) is required as a cofactor.

The protein localises to the cytoplasm. The catalysed reaction is RNA(n+1) + phosphate = RNA(n) + a ribonucleoside 5'-diphosphate. Its function is as follows. Involved in mRNA degradation. Catalyzes the phosphorolysis of single-stranded polyribonucleotides processively in the 3'- to 5'-direction. This is Polyribonucleotide nucleotidyltransferase from Onion yellows phytoplasma (strain OY-M).